A 98-amino-acid polypeptide reads, in one-letter code: HIG1 domain family member 1B (98 aa).

At Met-1–Ser-28 the chain is on the cytoplasmic side. The HIG1 domain occupies Met-1–Glu-94. The helical transmembrane segment at Pro-29–Ile-46 threads the bilayer. The Extracellular portion of the chain corresponds to Tyr-47–His-60. A helical membrane pass occupies residues Leu-61–Thr-83. Topologically, residues Met-84 to Lys-98 are cytoplasmic.

It localises to the membrane. The chain is HIG1 domain family member 1B (Higd1b) from Mus musculus (Mouse).